A 335-amino-acid chain; its full sequence is Fructose-1,6-bisphosphatase class 1 (335 aa).

Mg(2+) is bound by residues E92, D114, L116, and D117. Residues 117 to 120, N210, Y242, and K274 each bind substrate; that span reads DGSS. E280 contributes to the Mg(2+) binding site.

This sequence belongs to the FBPase class 1 family. As to quaternary structure, homotetramer. Mg(2+) is required as a cofactor.

The protein localises to the cytoplasm. It catalyses the reaction beta-D-fructose 1,6-bisphosphate + H2O = beta-D-fructose 6-phosphate + phosphate. The protein operates within carbohydrate biosynthesis; gluconeogenesis. The protein is Fructose-1,6-bisphosphatase class 1 of Lawsonia intracellularis (strain PHE/MN1-00).